A 323-amino-acid chain; its full sequence is Thymidylate synthase (323 aa).

Residues Arg-21 and 172-173 (RR) each bind dUMP. Cys-192 functions as the Nucleophile in the catalytic mechanism. DUMP is bound by residues 214-217 (RSND), Asn-225, and 255-257 (HVY). (6R)-5,10-methylene-5,6,7,8-tetrahydrofolate is bound at residue Asp-217. Ala-322 provides a ligand contact to (6R)-5,10-methylene-5,6,7,8-tetrahydrofolate.

Belongs to the thymidylate synthase family. Bacterial-type ThyA subfamily. As to quaternary structure, homodimer.

Its subcellular location is the cytoplasm. It carries out the reaction dUMP + (6R)-5,10-methylene-5,6,7,8-tetrahydrofolate = 7,8-dihydrofolate + dTMP. It functions in the pathway pyrimidine metabolism; dTTP biosynthesis. In terms of biological role, catalyzes the reductive methylation of 2'-deoxyuridine-5'-monophosphate (dUMP) to 2'-deoxythymidine-5'-monophosphate (dTMP) while utilizing 5,10-methylenetetrahydrofolate (mTHF) as the methyl donor and reductant in the reaction, yielding dihydrofolate (DHF) as a by-product. This enzymatic reaction provides an intracellular de novo source of dTMP, an essential precursor for DNA biosynthesis. The polypeptide is Thymidylate synthase (Pseudomonas putida (strain ATCC 47054 / DSM 6125 / CFBP 8728 / NCIMB 11950 / KT2440)).